Reading from the N-terminus, the 273-residue chain is Nicotinamide N-methyltransferase (273 aa).

S-adenosyl-L-methionine-binding positions include Y35, Y40, 74-75, Y80, D96, N101, and 152-153; these read GA and NV.

Belongs to the class I-like SAM-binding methyltransferase superfamily. NNMT/PNMT/TEMT family.

It catalyses the reaction nicotinamide + S-adenosyl-L-methionine = 1-methylnicotinamide + S-adenosyl-L-homocysteine. Its function is as follows. Catalyzes the N-methylation of nicotinamide and other pyridines to form pyridinium ions. Involved in regulation of lifespan extension downstream of the sirtuin sir-2.1, probably through its role in nicotinic acid metabolism. This is Nicotinamide N-methyltransferase from Caenorhabditis elegans.